Here is a 1035-residue protein sequence, read N- to C-terminus: Sialidase A (1035 aa).

A signal peptide spans 1 to 53 (MSYFRNRDIDIERNSMNRSVQERKCRYSIRKLSVGAVSMIVGAVVFGTSPVLA). The segment at 57-112 (ASEQPLANETQLSGESSTLTDTEKSQPSSETELSGNKQEQERKDKQEEKIPRDYYA) is disordered. The segment covering 61-92 (PLANETQLSGESSTLTDTEKSQPSSETELSGN) has biased composition (polar residues). Over residues 94 to 112 (QEQERKDKQEEKIPRDYYA) the composition is skewed to basic and acidic residues. A substrate-binding site is contributed by Arg-347. Asp-372 (proton acceptor) is an active-site residue. BNR repeat units follow at residues 381–392 (RRSEDNGKTWGD), 539–550 (SYSDDDGKTWSA), and 607–618 (IYSDDHGKTWHA). Glu-647 is a catalytic residue. Residue Arg-663 participates in substrate binding. One copy of the BNR 4 repeat lies at 672-683 (ATSKDGGVTWEK). Residues 902–951 (GPLGTSGEEPAPTVEKPEYTGPLGTSGEEPAPTVEKPEYTGPLGTAGEEA) form a disordered region. An LPXTG sorting signal motif is present at residues 1003–1007 (LPETG). Thr-1006 is subject to Pentaglycyl murein peptidoglycan amidated threonine. A propeptide spans 1007–1035 (GNKESDLLASLGLTAFFLGLFTLGKKREQ) (removed by sortase).

It belongs to the glycosyl hydrolase 33 family.

Its subcellular location is the secreted. It localises to the cell wall. The enzyme catalyses Hydrolysis of alpha-(2-&gt;3)-, alpha-(2-&gt;6)-, alpha-(2-&gt;8)- glycosidic linkages of terminal sialic acid residues in oligosaccharides, glycoproteins, glycolipids, colominic acid and synthetic substrates.. The chain is Sialidase A (nanA) from Streptococcus pneumoniae.